A 41-amino-acid polypeptide reads, in one-letter code: APGNKAECEREKGYCGFLKCSFPFVVSGKCSRFFFCCKNIW.

Cystine bridges form between C8-C36, C15-C30, and C20-C37.

The protein localises to the secreted. Functionally, has antibacterial activity against the Gram-positive bacterium S.aureus 1056 MRSA (MIC=1.25 ug/ml) and the Gram-negative bacterium E.coli O157:H7 (MIC=0.96 ug/ml). Has antifungal activity against the yeast C.albicans 3153A (MIC=6.20 ug/ml). The chain is Ostricacin-2 from Struthio camelus (Common ostrich).